A 93-amino-acid chain; its full sequence is Large ribosomal subunit protein eL42 (93 aa).

Positions 11, 14, 71, and 74 each coordinate Zn(2+). The C4-type zinc finger occupies Cys-11–Cys-74.

This sequence belongs to the eukaryotic ribosomal protein eL42 family. As to quaternary structure, part of the 50S ribosomal subunit. It depends on Zn(2+) as a cofactor.

In terms of biological role, binds to the 23S rRNA. This chain is Large ribosomal subunit protein eL42, found in Thermoplasma acidophilum (strain ATCC 25905 / DSM 1728 / JCM 9062 / NBRC 15155 / AMRC-C165).